The sequence spans 236 residues: Baculoviral IAP repeat-containing protein 8 (236 aa).

The BIR repeat unit spans residues 7–70; that stretch reads RLITFGTWMY…KWYPGCKYLL (64 aa). Residues Cys39, Cys42, His59, and Cys66 each coordinate Zn(2+). The segment at 189-224 adopts an RING-type zinc-finger fold; it reads CKICMDRHIAVVFIPCGHLVTCKQCAEAVDRCPMCS.

This sequence belongs to the IAP family. In terms of assembly, binds to caspase-9. As to expression, testis specific in normal tissues.

It is found in the cytoplasm. Its function is as follows. Protects against apoptosis mediated by BAX. The sequence is that of Baculoviral IAP repeat-containing protein 8 (BIRC8) from Homo sapiens (Human).